Here is a 306-residue protein sequence, read N- to C-terminus: tRNA dimethylallyltransferase (306 aa).

Residue 14 to 21 participates in ATP binding; it reads GPTAAGKS. 16–21 is a substrate binding site; sequence TAAGKS. An interaction with substrate tRNA region spans residues 39–42; sequence DSRL.

It belongs to the IPP transferase family. Monomer. The cofactor is Mg(2+).

The enzyme catalyses adenosine(37) in tRNA + dimethylallyl diphosphate = N(6)-dimethylallyladenosine(37) in tRNA + diphosphate. Functionally, catalyzes the transfer of a dimethylallyl group onto the adenine at position 37 in tRNAs that read codons beginning with uridine, leading to the formation of N6-(dimethylallyl)adenosine (i(6)A). This Synechococcus sp. (strain ATCC 27144 / PCC 6301 / SAUG 1402/1) (Anacystis nidulans) protein is tRNA dimethylallyltransferase.